A 444-amino-acid chain; its full sequence is UDP-N-acetylmuramoylalanine--D-glutamate ligase (444 aa).

109 to 115 (GSNGKTT) serves as a coordination point for ATP.

The protein belongs to the MurCDEF family.

The protein localises to the cytoplasm. It catalyses the reaction UDP-N-acetyl-alpha-D-muramoyl-L-alanine + D-glutamate + ATP = UDP-N-acetyl-alpha-D-muramoyl-L-alanyl-D-glutamate + ADP + phosphate + H(+). It functions in the pathway cell wall biogenesis; peptidoglycan biosynthesis. Cell wall formation. Catalyzes the addition of glutamate to the nucleotide precursor UDP-N-acetylmuramoyl-L-alanine (UMA). The polypeptide is UDP-N-acetylmuramoylalanine--D-glutamate ligase (Bacteroides thetaiotaomicron (strain ATCC 29148 / DSM 2079 / JCM 5827 / CCUG 10774 / NCTC 10582 / VPI-5482 / E50)).